We begin with the raw amino-acid sequence, 123 residues long: Probable prefoldin subunit 4 (123 aa).

This sequence belongs to the prefoldin subunit beta family. As to quaternary structure, heterohexamer of two PFD-alpha type and four PFD-beta type subunits.

Binds specifically to cytosolic chaperonin (c-CPN) and transfers target proteins to it. Binds to nascent polypeptide chain and promotes folding in an environment in which there are many competing pathways for nonnative proteins. In Schizosaccharomyces pombe (strain 972 / ATCC 24843) (Fission yeast), this protein is Probable prefoldin subunit 4.